Here is a 472-residue protein sequence, read N- to C-terminus: Coronin-6 (472 aa).

5 WD repeats span residues 79–119 (GHTG…PVRN), 129–169 (GHSK…VLLS), 173–212 (IHPD…VVAE), 216–259 (AHEG…EPVA), and 264–304 (DTSN…PFVH). Residues 409–434 (NILDVRPPASPRRSQSASEAPLSQQH) are disordered. Residues 419-429 (PRRSQSASEAP) are compositionally biased toward low complexity. A coiled-coil region spans residues 430–469 (LSQQHTLETLLEEMKALRERVQAQEERITALENMLCELVD).

The sequence is that of Coronin-6 (Coro6) from Rattus norvegicus (Rat).